The following is a 138-amino-acid chain: Small ribosomal subunit protein bS18m (138 aa).

This sequence belongs to the bacterial ribosomal protein bS18 family. In terms of assembly, component of the mitochondrial small ribosomal subunit. Mature mitochondrial ribosomes consist of a small (37S) and a large (54S) subunit. The 37S subunit contains at least 33 different proteins and 1 molecule of RNA (15S). The 54S subunit contains at least 45 different proteins and 1 molecule of RNA (21S).

The protein resides in the mitochondrion. The protein is Small ribosomal subunit protein bS18m (RSM18) of Saccharomyces cerevisiae (strain RM11-1a) (Baker's yeast).